A 269-amino-acid chain; its full sequence is Hydroxyethylthiazole kinase (269 aa).

Met-46 contributes to the substrate binding site. 2 residues coordinate ATP: Arg-121 and Thr-166. Gly-193 is a substrate binding site.

The protein belongs to the Thz kinase family. It depends on Mg(2+) as a cofactor.

It carries out the reaction 5-(2-hydroxyethyl)-4-methylthiazole + ATP = 4-methyl-5-(2-phosphooxyethyl)-thiazole + ADP + H(+). It participates in cofactor biosynthesis; thiamine diphosphate biosynthesis; 4-methyl-5-(2-phosphoethyl)-thiazole from 5-(2-hydroxyethyl)-4-methylthiazole: step 1/1. Functionally, catalyzes the phosphorylation of the hydroxyl group of 4-methyl-5-beta-hydroxyethylthiazole (THZ). This Limosilactobacillus reuteri (strain DSM 20016) (Lactobacillus reuteri) protein is Hydroxyethylthiazole kinase.